Here is a 411-residue protein sequence, read N- to C-terminus: Argininosuccinate synthase (411 aa).

Residues 10–18 (AYSGGLDTS) and A37 contribute to the ATP site. L-citrulline-binding residues include Y89 and S94. G119 provides a ligand contact to ATP. L-aspartate contacts are provided by T121, N125, and D126. Position 125 (N125) interacts with L-citrulline. Residues R129, S178, S187, E263, and Y275 each coordinate L-citrulline.

It belongs to the argininosuccinate synthase family. Type 1 subfamily. As to quaternary structure, homotetramer.

The protein localises to the cytoplasm. The catalysed reaction is L-citrulline + L-aspartate + ATP = 2-(N(omega)-L-arginino)succinate + AMP + diphosphate + H(+). It participates in amino-acid biosynthesis; L-arginine biosynthesis; L-arginine from L-ornithine and carbamoyl phosphate: step 2/3. The chain is Argininosuccinate synthase from Aeromonas salmonicida (strain A449).